The following is a 263-amino-acid chain: Single-stranded DNA-binding protein WHY1, chloroplastic (263 aa).

The transit peptide at 1-47 (MSQLLSTPLMAVNSNPRFLSSSSVLVTGGFAVKRHGFALKPTTKTVK) directs the protein to the chloroplast. The interval 89 to 94 (KGKAAL) is required for ssDNA binding. The short motif at 167 to 180 (KGKSDEGKVRKVLK) is the Nuclear localization signal element.

Belongs to the Whirly family. As to quaternary structure, homotetramer.

It localises to the plastid. It is found in the chloroplast. The protein resides in the nucleus. Functionally, single-stranded DNA-binding protein that functions in both chloroplasts and nucleus. In chloroplasts, maintains plastid genome stability by preventing break-induced and short homology-dependent illegitimate recombinations. In nucleus, modulates telomere length homeostasis by inhibiting the action of the telomerase at the extreme termini of chromosomes. Is recruited to a distal element upstream of the kinesin KP1 to mediate the transcriptional repression of KP1. Is required for full salicylic acid-dependent plant disease resistance responses. Can bind double-stranded DNA in vivo. The chain is Single-stranded DNA-binding protein WHY1, chloroplastic (WHY1) from Arabidopsis thaliana (Mouse-ear cress).